The chain runs to 1946 residues: Integrin beta-like protein E (1946 aa).

The N-terminal stretch at 1–22 is a signal peptide; that stretch reads MNNLFKFLFVLLAIFCPPISDL. The Extracellular portion of the chain corresponds to 23–1875; it reads VVSHGVPQQH…ATTQTTNNKT (1853 aa). N107, N134, and N203 each carry an N-linked (GlcNAc...) asparagine glycan. The EGF-like domain occupies 423-460; sequence YGQNCDPTPPCDKGIPNEGILGDGKCMCINGYSGDKCD. Disulfide bonds link C433–C448 and C450–C459. The VWFA domain occupies 514 to 699; that stretch reads DVFVLVDVNV…AGLKSVLSNV (186 aa). N-linked (GlcNAc...) asparagine glycosylation is found at N705, N860, N1043, N1113, N1177, N1374, N1401, N1513, N1611, N1620, N1662, N1671, N1737, N1743, N1762, N1812, N1852, and N1873. Residues 1876-1896 traverse the membrane as a helical segment; it reads VLTGAIAGAAAGTALIAAAAW. The Cytoplasmic portion of the chain corresponds to 1897–1946; the sequence is KLLRKAAPPTDTFFSEAAFLGDGVNANPLYEQSASAAENPLYQSASDNTD.

The protein belongs to the SIB family. Interacts with talA/talin.

The protein localises to the membrane. Its function is as follows. Implicated in cellular adhesion. In Dictyostelium discoideum (Social amoeba), this protein is Integrin beta-like protein E (sibE).